A 90-amino-acid polypeptide reads, in one-letter code: UPF0298 protein YlbG (90 aa).

This sequence belongs to the UPF0298 family.

It localises to the cytoplasm. The chain is UPF0298 protein YlbG (ylbG) from Bacillus subtilis (strain 168).